The primary structure comprises 646 residues: Chaperone protein DnaK (646 aa).

At Thr198 the chain carries Phosphothreonine; by autocatalysis. The interval Glu603–Lys646 is disordered. Residues Ala618–Gln627 are compositionally biased toward low complexity.

Belongs to the heat shock protein 70 family.

Functionally, acts as a chaperone. The protein is Chaperone protein DnaK of Acinetobacter baumannii (strain AB307-0294).